Here is a 20-residue protein sequence, read N- to C-terminus: Brevinin-1LT (20 aa).

Cys-14 and Cys-20 are disulfide-bonded.

As to expression, expressed by the skin glands.

It is found in the secreted. Antimicrobial peptide. This Rana latastei (Italian agile frog) protein is Brevinin-1LT.